The following is a 331-amino-acid chain: Ferredoxin--NADP reductase (331 aa).

Residues Glu34, Gln42, Tyr47, Val87, Phe121, Asp285, and Thr325 each contribute to the FAD site.

It belongs to the ferredoxin--NADP reductase type 2 family. As to quaternary structure, homodimer. The cofactor is FAD.

The catalysed reaction is 2 reduced [2Fe-2S]-[ferredoxin] + NADP(+) + H(+) = 2 oxidized [2Fe-2S]-[ferredoxin] + NADPH. The sequence is that of Ferredoxin--NADP reductase from Lactiplantibacillus plantarum (strain ATCC BAA-793 / NCIMB 8826 / WCFS1) (Lactobacillus plantarum).